Here is a 477-residue protein sequence, read N- to C-terminus: Glutamyl-tRNA(Gln) amidotransferase subunit A (477 aa).

Active-site charge relay system residues include lysine 76 and serine 151. The active-site Acyl-ester intermediate is the serine 175.

The protein belongs to the amidase family. GatA subfamily. Heterotrimer of A, B and C subunits.

It carries out the reaction L-glutamyl-tRNA(Gln) + L-glutamine + ATP + H2O = L-glutaminyl-tRNA(Gln) + L-glutamate + ADP + phosphate + H(+). Its function is as follows. Allows the formation of correctly charged Gln-tRNA(Gln) through the transamidation of misacylated Glu-tRNA(Gln) in organisms which lack glutaminyl-tRNA synthetase. The reaction takes place in the presence of glutamine and ATP through an activated gamma-phospho-Glu-tRNA(Gln). The protein is Glutamyl-tRNA(Gln) amidotransferase subunit A of Chlorobium phaeobacteroides (strain BS1).